The following is a 969-amino-acid chain: Chromosome transmission fidelity protein 18 homolog (969 aa).

Positions 30-97 (EGTRDQAPPG…APSSPMVKRP (68 aa)) are disordered. Residue Thr51 is modified to Phosphothreonine. Ser221 is modified (phosphoserine). Disordered regions lie at residues 250–269 (SEGE…APGQ) and 318–340 (RKPR…GKWK). A compositionally biased stretch (low complexity) spans 257–268 (LEGPPAEEPAPG). 369–376 (GPPGLGKT) provides a ligand contact to ATP. The tract at residues 856-889 (ARSGPQVDQGSSGPASLWTDSGEKGTRQPAPRNH) is disordered. Positions 876–889 (SGEKGTRQPAPRNH) are enriched in basic and acidic residues.

This sequence belongs to the activator 1 small subunits family. CTF18 subfamily. As to quaternary structure, component of the CTF18-RFC complex, which consists of CTF18, CTF8, DCC1, RFC2, RFC3, RFC4 and RFC5. During assembly of the CTF18-RFC complex, CTF18 may first assemble into a subcomplex with RFC2, RFC3, RFC4 and RFC5. CTF18 then interacts directly with CTF8, which in turn interacts with DCC1. The CTF18-RFC complex associates with PCNA and with DNA polymerase POLH. The CTF18-RFC complex does not interact with the Rad9/Rad1/Hus1 complex. CTF18 interacts with SMC1A and RAD21. Interacts with DDX11.

The protein resides in the nucleus. Functionally, chromosome cohesion factor involved in sister chromatid cohesion and fidelity of chromosome transmission. Component of one of the cell nuclear antigen loader complexes, CTF18-replication factor C (CTF18-RFC), which consists of CTF18, CTF8, DCC1, RFC2, RFC3, RFC4 and RFC5. The CTF18-RFC complex binds to single-stranded and primed DNAs and has weak ATPase activity that is stimulated by the presence of primed DNA, replication protein A (RPA) and by proliferating cell nuclear antigen (PCNA). The CTF18-RFC complex catalyzes the ATP-dependent loading of PCNA onto primed and gapped DNA. Interacts with and stimulates DNA polymerase POLH. During DNA repair synthesis, involved in loading DNA polymerase POLE at the sites of local damage. This Mus musculus (Mouse) protein is Chromosome transmission fidelity protein 18 homolog (Chtf18).